The chain runs to 756 residues: Nucleomorphin (756 aa).

The segment covering 1–10 (MDLDYSSDNS) has biased composition (polar residues). The disordered stretch occupies residues 1–113 (MDLDYSSDNS…SQSNEDLSSS (113 aa)). 2 stretches are compositionally biased toward low complexity: residues 16–66 (NQNN…RPSS) and 75–94 (NNNN…NNNN). Residues 95-113 (GATISHPPTSQSNEDLSSS) show a composition bias toward polar residues. Residues 124–216 (LNSNIFENLG…ELLGVENYLV (93 aa)) form the BRCT domain. Disordered regions lie at residues 229–251 (NSSQ…INEQ), 272–298 (PSSL…LKSE), 359–403 (KIDL…NKNN), and 422–463 (TSST…LLNL). Composition is skewed to low complexity over residues 285–298 (LQTQ…LKSE), 364–401 (NNNN…NKNK), and 422–432 (TSSTSSTLSSS). The segment covering 448 to 459 (KSKKKFSQKKNH) has biased composition (basic residues). The Nuclear localization signal motif lies at 464–480 (KKSYQDPEIIAHSRPRK). The calmodulin binding stretch occupies residues 495-512 (ANYISNLDGFKYYARANK). Polar residues predominate over residues 514-529 (SLNSNATTSGGNNRSI). The interval 514–587 (SLNSNATTSG…SDEDDFDSDE (74 aa)) is disordered. Residues 536–587 (YDDEEEDEEDEDEEDEEEDEEEEEEEEEEEEDYDDEDLNDEESDEDDFDSDE) show a composition bias toward acidic residues. The interval 537-588 (DDEEEDEEDEDEEDEEEDEEEEEEEEEEEEDYDDEDLNDEESDEDDFDSDED) is DEED region. Calmodulin binding stretches follow at residues 589–606 (VSRF…KIYK) and 596–613 (KLLQ…RFEH). Disordered stretches follow at residues 613–639 (HSRQ…SHSR) and 660–700 (LSPT…RTNI). The segment covering 668-691 (LSNQFHQDGGNNTTDGNLFNNFST) has biased composition (polar residues).

As to quaternary structure, interacts with calmodulin and CBPD1 in the presence of Ca(2+).

The protein resides in the nucleus. The polypeptide is Nucleomorphin (numA) (Dictyostelium discoideum (Social amoeba)).